Reading from the N-terminus, the 159-residue chain is Transcription elongation factor A protein-like 1 (159 aa).

Positions 1-121 are disordered; it reads MDKPRKENEE…QFKGDIHGRN (121 aa). The segment covering 17-34 has biased composition (basic and acidic residues); it reads KTDEERPPVEHSPEKQSP. Acidic residues predominate over residues 37–54; that stretch reads QSSEEQSSEEEFFPEELL. Composition is skewed to basic and acidic residues over residues 64-80 and 95-119; these read SEERPPQEGLSRKDLFE and HKLEEGSFKERLARSRPQFKGDIHG.

The protein belongs to the TFS-II family. TFA subfamily.

The protein resides in the nucleus. Functionally, may be involved in transcriptional regulation. Modulates various viral and cellular promoters in a promoter context-dependent manner. Does not bind DNA directly. The protein is Transcription elongation factor A protein-like 1 of Gorilla gorilla gorilla (Western lowland gorilla).